A 486-amino-acid chain; its full sequence is Glycogen synthase (486 aa).

Lysine 15 provides a ligand contact to ADP-alpha-D-glucose.

Belongs to the glycosyltransferase 1 family. Bacterial/plant glycogen synthase subfamily.

The enzyme catalyses [(1-&gt;4)-alpha-D-glucosyl](n) + ADP-alpha-D-glucose = [(1-&gt;4)-alpha-D-glucosyl](n+1) + ADP + H(+). It functions in the pathway glycan biosynthesis; glycogen biosynthesis. In terms of biological role, synthesizes alpha-1,4-glucan chains using ADP-glucose. This Thermotoga petrophila (strain ATCC BAA-488 / DSM 13995 / JCM 10881 / RKU-1) protein is Glycogen synthase.